A 109-amino-acid polypeptide reads, in one-letter code: Nucleoid-associated protein Spro_1136 (109 aa).

Disordered stretches follow at residues 1 to 21 and 90 to 109; these read MFGKGGLGNLMKQAQQMQEKM and EKMASVSNGMQLPPGFKMPF. Positions 11 to 21 are enriched in low complexity; that stretch reads MKQAQQMQEKM.

It belongs to the YbaB/EbfC family. In terms of assembly, homodimer.

It localises to the cytoplasm. The protein localises to the nucleoid. Functionally, binds to DNA and alters its conformation. May be involved in regulation of gene expression, nucleoid organization and DNA protection. The sequence is that of Nucleoid-associated protein Spro_1136 from Serratia proteamaculans (strain 568).